We begin with the raw amino-acid sequence, 154 residues long: Hydroperoxy fatty acid reductase Gpx2 (154 aa).

Cys-34 is a catalytic residue.

This sequence belongs to the glutathione peroxidase family. As to quaternary structure, monomer.

It catalyses the reaction a hydroperoxy polyunsaturated fatty acid + NADPH + H(+) = a hydroxy polyunsaturated fatty acid + NADP(+) + H2O. Mercaptosuccinate, pCMB, and nethylmaleimide act as inhibitors of the catalytic activity. Its function is as follows. Hydroperoxy fatty acid reductase essential for the removal of lipid hydroperoxides under normal and stress conditions, leading to the protection of membrane integrity. The chain is Hydroperoxy fatty acid reductase Gpx2 (gpx2) from Synechocystis sp. (strain ATCC 27184 / PCC 6803 / Kazusa).